A 1176-amino-acid chain; its full sequence is Surface-layer 125 kDa protein (1176 aa).

The first 30 residues, 1–30 (MAKQNKGRKFFAASATAALVASAIVPVASA), serve as a signal peptide directing secretion. SLH domains are found at residues 31-88 (AQLN…LEAE), 89-152 (GDVN…DLSE), and 153-216 (FADA…PKVD).

The protein resides in the secreted. The protein localises to the cell wall. It is found in the S-layer. In terms of biological role, the S-layer is a paracrystalline mono-layered assembly of proteins which coat the surface of bacteria. This is Surface-layer 125 kDa protein from Lysinibacillus sphaericus (Bacillus sphaericus).